The chain runs to 494 residues: Protein nucleotidyltransferase YdiU (494 aa).

Residues glycine 90, glycine 92, arginine 93, lysine 113, aspartate 125, glycine 126, arginine 176, and arginine 183 each coordinate ATP. The active-site Proton acceptor is the aspartate 252. Positions 253 and 262 each coordinate Mg(2+). Aspartate 262 lines the ATP pocket.

Belongs to the SELO family. The cofactor is Mg(2+). Mn(2+) serves as cofactor.

The catalysed reaction is L-seryl-[protein] + ATP = 3-O-(5'-adenylyl)-L-seryl-[protein] + diphosphate. It catalyses the reaction L-threonyl-[protein] + ATP = 3-O-(5'-adenylyl)-L-threonyl-[protein] + diphosphate. The enzyme catalyses L-tyrosyl-[protein] + ATP = O-(5'-adenylyl)-L-tyrosyl-[protein] + diphosphate. It carries out the reaction L-histidyl-[protein] + UTP = N(tele)-(5'-uridylyl)-L-histidyl-[protein] + diphosphate. The catalysed reaction is L-seryl-[protein] + UTP = O-(5'-uridylyl)-L-seryl-[protein] + diphosphate. It catalyses the reaction L-tyrosyl-[protein] + UTP = O-(5'-uridylyl)-L-tyrosyl-[protein] + diphosphate. Its function is as follows. Nucleotidyltransferase involved in the post-translational modification of proteins. It can catalyze the addition of adenosine monophosphate (AMP) or uridine monophosphate (UMP) to a protein, resulting in modifications known as AMPylation and UMPylation. The polypeptide is Protein nucleotidyltransferase YdiU (Alkalilimnicola ehrlichii (strain ATCC BAA-1101 / DSM 17681 / MLHE-1)).